A 621-amino-acid chain; its full sequence is Archaeal Lon protease (621 aa).

At 1-117 (MNEEVREILG…YKEEAMKKAQ (117 aa)) the chain is on the cytoplasmic side. Residue 54-61 (GSPGTGKS) participates in ATP binding. A helical membrane pass occupies residues 118–136 (ARNFLIFTLVFLVIGYTVL). Over 137–141 (TNPGN) the chain is Extracellular. Residues 142–160 (LIWGIIAAVLILMMSRYFI) form a helical membrane-spanning segment. The Cytoplasmic portion of the chain corresponds to 161–621 (PREDRNVPKL…KFKELELAAV (461 aa)). Positions 423–602 (GYEVGRVNGL…NEVLEHVLED (180 aa)) constitute a Lon proteolytic domain. Active-site residues include Ser509 and Lys552.

This sequence belongs to the peptidase S16 family. Archaeal LonB subfamily. In terms of assembly, homohexamer. Organized in a ring with a central cavity.

It is found in the cell membrane. ATP-dependent serine protease that mediates the selective degradation of mutant and abnormal proteins as well as certain short-lived regulatory proteins. Degrades polypeptides processively. This Archaeoglobus fulgidus (strain ATCC 49558 / DSM 4304 / JCM 9628 / NBRC 100126 / VC-16) protein is Archaeal Lon protease.